A 382-amino-acid polypeptide reads, in one-letter code: Putative oxidoreductase C1F5.03c (382 aa).

Residues 7-27 form a helical membrane-spanning segment; the sequence is IVIVGGGITGVSCLYFLAHHP.

This sequence belongs to the TDA3 family.

The protein resides in the cytoplasm. It localises to the membrane. Its function is as follows. Putative oxidoreductase that negatively regulates the retrieval of cargo from late endosomes to the Golgi. The polypeptide is Putative oxidoreductase C1F5.03c (Schizosaccharomyces pombe (strain 972 / ATCC 24843) (Fission yeast)).